The following is a 229-amino-acid chain: MELLLLSNSTLPGKAWLEHALPLIANQLNGRRSAVFIPFAGVTQTWDEYTDKTAEVLAPLGVNVTGIHRVADPLAAIEKAEIIIVGGGNTFQLLKESRERGLLAPMADRVKRGALYIGWSAGANLACPAIRTTNDMPIVDPNGFDALDLFPLQINPHFTNALPEGHKGETREQRIRELLVVAPELTVIGLPEGNWIQVSNGQAVLGGPNTTWVFKAGEEAVALEAGHRF.

Active-site charge relay system residues include Ser-120, Asp-135, and His-157.

Belongs to the peptidase S51 family.

It is found in the cytoplasm. It carries out the reaction Dipeptidase E catalyzes the hydrolysis of dipeptides Asp-|-Xaa. It does not act on peptides with N-terminal Glu, Asn or Gln, nor does it cleave isoaspartyl peptides.. Functionally, hydrolyzes dipeptides containing N-terminal aspartate residues. May play a role in allowing the cell to use peptide aspartate to spare carbon otherwise required for the synthesis of the aspartate family of amino acids. The protein is Peptidase E of Salmonella paratyphi C (strain RKS4594).